The sequence spans 339 residues: RNA 3'-terminal phosphate cyclase (339 aa).

Residues Gln101 and 283 to 286 (HMSD) each bind ATP. Catalysis depends on His307, which acts as the Tele-AMP-histidine intermediate.

It belongs to the RNA 3'-terminal cyclase family. Type 1 subfamily.

Its subcellular location is the cytoplasm. It carries out the reaction a 3'-end 3'-phospho-ribonucleotide-RNA + ATP = a 3'-end 2',3'-cyclophospho-ribonucleotide-RNA + AMP + diphosphate. Functionally, catalyzes the conversion of 3'-phosphate to a 2',3'-cyclic phosphodiester at the end of RNA. The mechanism of action of the enzyme occurs in 3 steps: (A) adenylation of the enzyme by ATP; (B) transfer of adenylate to an RNA-N3'P to produce RNA-N3'PP5'A; (C) and attack of the adjacent 2'-hydroxyl on the 3'-phosphorus in the diester linkage to produce the cyclic end product. The biological role of this enzyme is unknown but it is likely to function in some aspects of cellular RNA processing. This is RNA 3'-terminal phosphate cyclase from Sulfurisphaera tokodaii (strain DSM 16993 / JCM 10545 / NBRC 100140 / 7) (Sulfolobus tokodaii).